We begin with the raw amino-acid sequence, 1312 residues long: DNA repair protein RAD50 (1312 aa).

Arg13, Asn38, Gly39, Gly41, Lys42, Thr43, Thr44, Val67, Asp69, and Gln159 together coordinate ATP. Thr43 contributes to the Mg(2+) binding site. Gln159 is a Mg(2+) binding site. 3 coiled-coil regions span residues 228-359 (TSKE…QADR), 401-598 (RERQ…AKLN), and 635-673 (SQDF…ITQL). Position 635 is a phosphoserine; by ATM (Ser635). A Zinc-hook domain is found at 635 to 734 (SQDFESDLDR…RRDEMLGLVP (100 aa)). Residues Cys681 and Cys684 each contribute to the Zn(2+) site. The residue at position 690 (Thr690) is a Phosphothreonine. Coiled-coil stretches lie at residues 706 to 734 (RLAP…GLVP) and 789 to 1079 (LTDV…GRQK). At Lys959 the chain carries N6-acetyllysine.

It belongs to the SMC family. RAD50 subfamily. Component of the MRN complex composed of two heterodimers RAD50 and MRE11 associated with a single NBN. The MRN complexes dimerize on DNA to form joined MRN-MRN oligomers required for DNA double-strand break repair. As part of the MRN complex, interacts with MCM8 and MCM9; the interaction recruits the complex to DNA repair sites. Component of the BASC complex, at least composed of BRCA1, MSH2, MSH6, MLH1, ATM, BLM, RAD50, MRE11 and NBN. Found in a complex with TERF2. Interacts with RINT1. Interacts with BRCA1 via its N-terminal domain. Interacts with DCLRE1C/Artemis. Interacts with MRNIP. Interacts with CYREN (via XLF motif). Interacts with C1QBP and MRE11; interaction takes place in absence of DNA damage to form the MRC (MRE11-RAD50-C1QBP) complex that inhibits the activity of MRE11. In terms of assembly, (Microbial infection) Interacts with herpes simplex virus 1 protein UL12. It depends on Zn(2+) as a cofactor. In terms of processing, phosphorylation at Ser-635 by ATM in response to DNA damage is required for double-strand break (DSB) repair. As to expression, expressed at very low level in most tissues, except in testis where it is expressed at higher level. Expressed in fibroblasts.

Its subcellular location is the nucleus. It is found in the chromosome. The protein resides in the telomere. It carries out the reaction ATP + H2O = ADP + phosphate + H(+). Component of the MRN complex, which plays a central role in double-strand break (DSB) repair, DNA recombination, maintenance of telomere integrity and meiosis. The MRN complex is involved in the repair of DNA double-strand breaks (DSBs) via homologous recombination (HR), an error-free mechanism which primarily occurs during S and G2 phases. The complex (1) mediates the end resection of damaged DNA, which generates proper single-stranded DNA, a key initial steps in HR, and is (2) required for the recruitment of other repair factors and efficient activation of ATM and ATR upon DNA damage. The MRN complex possesses single-strand endonuclease activity and double-strand-specific 3'-5' exonuclease activity, which are provided by MRE11, to initiate end resection, which is required for single-strand invasion and recombination. Within the complex, RAD50 is both required to bind DNA ends and hold them in close proximity and regulate the activity of MRE11. RAD50 provides an ATP-dependent control of MRE11 by positioning DNA ends into the MRE11 active site: ATP-binding induces a large structural change from an open form with accessible MRE11 nuclease sites into a closed form. The MRN complex is also required for DNA damage signaling via activation of the ATM and ATR kinases: the nuclease activity of MRE11 is not required to activate ATM and ATR. The MRN complex is also required for the processing of R-loops. In telomeres the MRN complex may modulate t-loop formation. This chain is DNA repair protein RAD50, found in Homo sapiens (Human).